We begin with the raw amino-acid sequence, 1088 residues long: MGKYNLVLSEYLSFVYNSQSAVQIPIYYSSNSELEKRCIEFHAKCVDSSKKGLSLKPLFEEYKDVIDNATLLSILSYSYDKYNAVERKLVNYAKGKPLEADLTANELDYENNKITSELFQSAEEYTDSLMDPAILTSLSSNLNAVMFWLERHSNDVADANKIYKRRLDLFTIVASTVNKYGVPRHNEKYRYEYEVMKDKPYYLVTWANSSIEMLMSVFSHEDYLIAKELIILSYSNRSTLAKLVSSPMSILVALIDINGTFITNEELELEFSDKYVKAIVPDQIFDELQEMIDNMRKVGLVDIPKMIQEWLVDCSLEKFTLMSKIYSWSFHVGFRKQKMIDAALDQLKTEYTEDVDGEMYNEYTMLIRDEIVKMLEVPVKHDDHLLRDSELAGLLSMSSASNGESRQLKFGRKTIFSTKKNMHVMDDIAHGRYTPGVIPPVNVDRPIPLGRRDVPGRRTRIIFILPYEYFIAQHAVVEKMLLYAKHTREYAEFYSQSNQLLSYGDVTRFLSSNSMVLYTDVSQWDSSQHNTQPFRKGIIMGLDMLSNMTNDPKVAQTLNLYKQTQINLMDSYVQIPDGNVIKKIQYGAVASGEKQTKAANSIANLALIKMVLSRIANKYSFITKIIRVDGDDNYAVLQFNTDVTKQMVQDVSNDVRYIYSRMNAKVKALVSTVGIEIAKRYIAGGKIFFRAGINLLNNEKRGQSTQWDQAAILYSNYIVNKLRGFETDREFILTKIIQMTSVAITGSLRLFPSERVLTTNSTFKVFDSEDFIIEYGTTDDEVYIQRAFMSLSSQKSGIADEIASSQTFKNYVNKLSDQLLVSKNVIVSKGIAVTEKAKLNSYAPVYLEKRRAQISALLTMLQKPVSFKSNKITINDILRDIKPFFVTSEANLSIQYRKFMPTLPDNVQYVIQCIGSRTYQIEDSGSKSSISKLISKYSVYKPSIEELYKVISLREQEIQLYLVSLGVPPVDAGTYVGSRIYSQDKYKILESYVYNLLSINYGCYQLFDFNSPDLEKLIRIPFKGKIPAVTFILHLYAKLEIINYAIKNGAWISLFCNYPKSEMIKLWKKMWNITALRSPYTSANFFQD.

A RdRp catalytic domain is found at 501–687 (LSYGDVTRFL…AKRYIAGGKI (187 aa)).

It belongs to the reoviridae RNA-directed RNA polymerase family. Interacts with VP3 (Potential). Interacts with VP2; this interaction activates VP1. Interacts with NSP5; this interaction is probably necessary for the formation of functional virus factories. Interacts with NSP2; this interaction is weak. The cofactor is Mg(2+).

Its subcellular location is the virion. It catalyses the reaction RNA(n) + a ribonucleoside 5'-triphosphate = RNA(n+1) + diphosphate. In terms of biological role, RNA-directed RNA polymerase that is involved in both transcription and genome replication. Together with VP3 capping enzyme, forms an enzyme complex positioned near the channels situated at each of the five-fold vertices of the core. Following infection, the outermost layer of the virus is lost, leaving a double-layered particle (DLP) made up of the core and VP6 shell. VP1 then catalyzes the transcription of fully conservative plus-strand genomic RNAs that are extruded through the DLP's channels into the cytoplasm where they function as mRNAs for translation of viral proteins. One copy of each of the viral (+)RNAs is also recruited during core assembly, together with newly synthesized polymerase complexes and VP2. The polymerase of these novo-formed particles catalyzes the synthesis of complementary minus-strands leading to dsRNA formation. To do so, the polymerase specifically recognizes and binds 4 bases 5'-UGUG-3' in the conserved 3'-sequence of plus-strand RNA templates. VP2 presumably activates the autoinhibited VP1-RNA complex to coordinate packaging and genome replication. Once dsRNA synthesis is complete, the polymerase switches to the transcriptional mode, thus providing secondary transcription. The protein is RNA-directed RNA polymerase of Homo sapiens (Human).